The chain runs to 606 residues: Medium-chain acyl-CoA ligase ACSF2, mitochondrial (606 aa).

A mitochondrion-targeting transit peptide spans 1–13 (MSSKILLTNLRTS). ATP contacts are provided by residues 256–264 (TSGTTGKPK), D484, R499, and K590.

The protein belongs to the ATP-dependent AMP-binding enzyme family.

It is found in the mitochondrion. It catalyses the reaction a medium-chain fatty acid + ATP + CoA = a medium-chain fatty acyl-CoA + AMP + diphosphate. It carries out the reaction octanoate + ATP + CoA = octanoyl-CoA + AMP + diphosphate. Its function is as follows. Acyl-CoA synthases catalyze the initial reaction in fatty acid metabolism, by forming a thioester with CoA. Has some preference toward medium-chain substrates. Plays a role in adipocyte differentiation. This chain is Medium-chain acyl-CoA ligase ACSF2, mitochondrial, found in Danio rerio (Zebrafish).